We begin with the raw amino-acid sequence, 149 residues long: Transcriptional repressor NrdR (149 aa).

A zinc finger lies at C3–C34. The region spanning P49–E139 is the ATP-cone domain.

Belongs to the NrdR family. Zn(2+) serves as cofactor.

Negatively regulates transcription of bacterial ribonucleotide reductase nrd genes and operons by binding to NrdR-boxes. This Polaromonas naphthalenivorans (strain CJ2) protein is Transcriptional repressor NrdR.